Consider the following 269-residue polypeptide: Formamidopyrimidine-DNA glycosylase (269 aa).

Catalysis depends on proline 2, which acts as the Schiff-base intermediate with DNA. The Proton donor role is filled by glutamate 3. Catalysis depends on lysine 58, which acts as the Proton donor; for beta-elimination activity. 3 residues coordinate DNA: histidine 91, arginine 110, and lysine 150. The segment at 235–269 (SVYGCENKTCHFCKSKIIKIVQNQRSTFYCRKCQT) adopts an FPG-type zinc-finger fold. Residue arginine 259 is the Proton donor; for delta-elimination activity of the active site.

It belongs to the FPG family. Monomer. It depends on Zn(2+) as a cofactor.

It catalyses the reaction Hydrolysis of DNA containing ring-opened 7-methylguanine residues, releasing 2,6-diamino-4-hydroxy-5-(N-methyl)formamidopyrimidine.. The enzyme catalyses 2'-deoxyribonucleotide-(2'-deoxyribose 5'-phosphate)-2'-deoxyribonucleotide-DNA = a 3'-end 2'-deoxyribonucleotide-(2,3-dehydro-2,3-deoxyribose 5'-phosphate)-DNA + a 5'-end 5'-phospho-2'-deoxyribonucleoside-DNA + H(+). Its function is as follows. Involved in base excision repair of DNA damaged by oxidation or by mutagenic agents. Acts as a DNA glycosylase that recognizes and removes damaged bases. Has a preference for oxidized purines, such as 7,8-dihydro-8-oxoguanine (8-oxoG). Has AP (apurinic/apyrimidinic) lyase activity and introduces nicks in the DNA strand. Cleaves the DNA backbone by beta-delta elimination to generate a single-strand break at the site of the removed base with both 3'- and 5'-phosphates. In Ruthia magnifica subsp. Calyptogena magnifica, this protein is Formamidopyrimidine-DNA glycosylase.